We begin with the raw amino-acid sequence, 439 residues long: C4-dicarboxylate transport protein (439 aa).

Transmembrane regions (helical) follow at residues 9–29 (SLYAQVIVAIIIGVLLGHFLP), 45–65 (LIKMIIAPVIFCTVVIGIAGM), 77–97 (LALLYFEVMSTVALLVGLIIV), 145–165 (AFAKGDVLQVLLVSVLFGFAL), 185–205 (VLFTIVGFIMRAAPVGAFGAM), 223–243 (LMGAFYLTCLFFIFVVLGIVT), 290–310 (VVGLVIPTGYSFNLDGTAIYL), 332–352 (TLLAVLLLTSKGAAGITGSGF), and 353–373 (IVLAATLSAVGHVPVAGLALI). The interval 417–439 (NESPQAADQPEKILDQTNTKLGA) is disordered.

Belongs to the dicarboxylate/amino acid:cation symporter (DAACS) (TC 2.A.23) family.

It is found in the cell inner membrane. Functionally, responsible for the transport of dicarboxylates such as succinate, fumarate, and malate from the periplasm across the membrane. In Janthinobacterium sp. (strain Marseille) (Minibacterium massiliensis), this protein is C4-dicarboxylate transport protein.